The sequence spans 227 residues: Enolase-phosphatase E1 (227 aa).

Mg(2+) is bound by residues Asp-11 and Glu-13. Substrate contacts are provided by residues 118–119 and Lys-161; that span reads SS. A Mg(2+)-binding site is contributed by Asp-186.

This sequence belongs to the HAD-like hydrolase superfamily. MasA/MtnC family. In terms of assembly, monomer. Mg(2+) serves as cofactor.

The protein resides in the cytoplasm. It localises to the nucleus. It carries out the reaction 5-methylsulfanyl-2,3-dioxopentyl phosphate + H2O = 1,2-dihydroxy-5-(methylsulfanyl)pent-1-en-3-one + phosphate. Its pathway is amino-acid biosynthesis; L-methionine biosynthesis via salvage pathway; L-methionine from S-methyl-5-thio-alpha-D-ribose 1-phosphate: step 3/6. It functions in the pathway amino-acid biosynthesis; L-methionine biosynthesis via salvage pathway; L-methionine from S-methyl-5-thio-alpha-D-ribose 1-phosphate: step 4/6. Bifunctional enzyme that catalyzes the enolization of 2,3-diketo-5-methylthiopentyl-1-phosphate (DK-MTP-1-P) into the intermediate 2-hydroxy-3-keto-5-methylthiopentenyl-1-phosphate (HK-MTPenyl-1-P), which is then dephosphorylated to form the acireductone 1,2-dihydroxy-3-keto-5-methylthiopentene (DHK-MTPene). The chain is Enolase-phosphatase E1 from Saccharomyces cerevisiae (strain RM11-1a) (Baker's yeast).